The sequence spans 466 residues: Glutamyl-tRNA reductase (466 aa).

Residues 47–50, Ser-107, 112–114, and Gln-118 contribute to the substrate site; these read TCNR and EQQ. The Nucleophile role is filled by Cys-48. 194–199 serves as a coordination point for NADP(+); the sequence is GAGAMS.

The protein belongs to the glutamyl-tRNA reductase family. As to quaternary structure, homodimer.

The enzyme catalyses (S)-4-amino-5-oxopentanoate + tRNA(Glu) + NADP(+) = L-glutamyl-tRNA(Glu) + NADPH + H(+). Its pathway is porphyrin-containing compound metabolism; protoporphyrin-IX biosynthesis; 5-aminolevulinate from L-glutamyl-tRNA(Glu): step 1/2. In terms of biological role, catalyzes the NADPH-dependent reduction of glutamyl-tRNA(Glu) to glutamate 1-semialdehyde (GSA). The protein is Glutamyl-tRNA reductase of Corynebacterium efficiens (strain DSM 44549 / YS-314 / AJ 12310 / JCM 11189 / NBRC 100395).